The primary structure comprises 274 residues: Ethanolamine ammonia-lyase small subunit (274 aa).

Val161, Glu182, and Cys211 together coordinate adenosylcob(III)alamin.

This sequence belongs to the EutC family. In terms of assembly, the basic unit is a heterodimer which dimerizes to form tetramers. The heterotetramers trimerize; 6 large subunits form a core ring with 6 small subunits projecting outwards. Requires adenosylcob(III)alamin as cofactor.

It is found in the bacterial microcompartment. It catalyses the reaction ethanolamine = acetaldehyde + NH4(+). Its pathway is amine and polyamine degradation; ethanolamine degradation. Functionally, catalyzes the deamination of various vicinal amino-alcohols to oxo compounds. Allows this organism to utilize ethanolamine as the sole source of nitrogen and carbon in the presence of external vitamin B12. The chain is Ethanolamine ammonia-lyase small subunit from Pseudomonas fluorescens (strain Pf0-1).